We begin with the raw amino-acid sequence, 376 residues long: Putative peptide import ATP-binding protein BMEII0205 (376 aa).

A disordered region spans residues 1 to 25; the sequence is MPLRPALHLRTGKLRQTPTHNEPDG. Residues 64–314 form the ABC transporter domain; it reads VRTDDLVRDF…PLHPYSRALL (251 aa). 106–113 serves as a coordination point for ATP; it reads GESGSGKS.

This sequence belongs to the ABC transporter superfamily. The complex is composed of two ATP-binding proteins (BMEII0205 and BMEII0206), two transmembrane proteins (BMEII0207/BMEII0208 and BMEII0209) and a solute-binding protein (BMEII0210).

The protein resides in the cell inner membrane. Functionally, probably part of an ABC transporter complex that could be involved in peptide import. Probably responsible for energy coupling to the transport system. The sequence is that of Putative peptide import ATP-binding protein BMEII0205 from Brucella melitensis biotype 1 (strain ATCC 23456 / CCUG 17765 / NCTC 10094 / 16M).